The chain runs to 1030 residues: ATPase MORC2A (1030 aa).

The residue at position 2 (Ala-2) is an N-acetylalanine. ATP-binding positions include Asn-39, 87–89, and 99–105; these read SAK and QYGNGLK. Position 39 (Asn-39) interacts with Mg(2+). Positions 285 to 362 form a coiled coil; the sequence is KTRAEQEVKK…KDAKQRALKE (78 aa). Lys-427 is an ATP binding site. The CW-type zinc-finger motif lies at 490–544; it reads AMEIPTTIQCDLCLKWRTLPFQLSSVETDYPDTWVCSMNPDPEQDRCEASEQKQK. Cys-499, Cys-502, Cys-525, and Cys-536 together coordinate Zn(2+). Residues 530-791 are disordered; sequence DPEQDRCEAS…HPAELRKAQK (262 aa). 2 stretches are compositionally biased toward basic and acidic residues: residues 532–543 and 550–577; these read EQDRCEASEQKQ and LKKDPKTQEEKQKQLTEKIRQQQEKLEA. Positions 555 to 583 form a coiled coil; sequence KTQEEKQKQLTEKIRQQQEKLEALQKTTP. The residue at position 582 (Thr-582) is a Phosphothreonine. Ser-614 bears the Phosphoserine mark. The span at 629–646 shows a compositional bias: polar residues; that stretch reads PSIQTPRPSTQLRKTSVI. Residues Lys-650 and Lys-702 each participate in a glycyl lysine isopeptide (Lys-Gly) (interchain with G-Cter in SUMO2) cross-link. Low complexity predominate over residues 693-702; that stretch reads PPLSLIPSSK. Ser-703 is subject to Phosphoserine. Lys-714 is covalently cross-linked (Glycyl lysine isopeptide (Lys-Gly) (interchain with G-Cter in SUMO2)). Phosphoserine is present on Ser-728. Thr-731 is modified (phosphothreonine). Phosphoserine occurs at positions 737 and 741. Residues 738 to 775 are a coiled coil; sequence LAVSDEEEAEEEAEKRRERCKRGKLAVKEEKKEANELS. Residues 763–772 show a composition bias toward basic and acidic residues; sequence AVKEEKKEAN. A Glycyl lysine isopeptide (Lys-Gly) (interchain with G-Cter in SUMO2) cross-link involves residue Lys-765. Residues Ser-775 and Ser-777 each carry the phosphoserine modification. Residues 779-791 show a composition bias toward basic and acidic residues; sequence GEDHPAELRKAQK. Lys-817 is covalently cross-linked (Glycyl lysine isopeptide (Lys-Gly) (interchain with G-Cter in SUMO2)). The residue at position 834 (Thr-834) is a Phosphothreonine. Residues 837 to 849 show a composition bias toward basic and acidic residues; it reads DRWVEKGSEDVRL. Disordered regions lie at residues 837–874 and 882–901; these read DRWVEKGSEDVRLMKPPSPEHQSPDTQQEGGEEEEAMV and PEPSTSDGLPIEPDTTATSP. Ser-854 and Ser-859 each carry phosphoserine. Residues 856 to 865 are compositionally biased toward polar residues; the sequence is EHQSPDTQQE. Lys-930 participates in a covalent cross-link: Glycyl lysine isopeptide (Lys-Gly) (interchain with G-Cter in SUMO2). A coiled-coil region spans residues 966 to 1011; sequence RADSRAKASEESLRTSEKKLRETEEKLQKLRTNIVALLQKVQEDID.

In terms of assembly, homodimerizes upon ATP-binding and dissociate upon ATP hydrolysis; homodimerization is required for gene silencing. Binds histone H3 independently of the methylation status at 'Lys-9'. Interacts with HDAC4. Interacts with FAM208A/TASOR and MPHOSPH8; the interactions associate MORC2 with the HUSH complex which recruits MORC2 to heterochromatic loci. Interacts with Morc2b. In terms of processing, phosphorylated by PAK1 at Ser-737 upon DNA damage. Phosphorylation is required for ATPase activity and recruitment to damaged chromatin. Expressed in the axons and Schwann cells of peripheral nerves. Expressed in testes.

The protein resides in the nucleus. Its subcellular location is the cytoplasm. It is found in the cytosol. The protein localises to the chromosome. It localises to the nucleus matrix. It catalyses the reaction ATP + H2O = ADP + phosphate + H(+). With respect to regulation, ATPase activity is dependent of phosphorylation by PAK1 and presence of DNA. Functionally, essential for epigenetic silencing by the HUSH complex. Recruited by HUSH to target site in heterochromatin, the ATPase activity and homodimerization are critical for HUSH-mediated silencing. Represses germ cell-related genes and L1 retrotransposons in collaboration with SETDB1 and the HUSH complex, the silencing is dependent of repressive epigenetic modifications, such as H3K9me3 mark. Silencing events often occur within introns of transcriptionally active genes, and lead to the down-regulation of host gene expression. During DNA damage response, regulates chromatin remodeling through ATP hydrolysis. During DNA damage response, may regulate chromatin remodeling through ATP hydrolysis. The protein is ATPase MORC2A of Mus musculus (Mouse).